A 258-amino-acid chain; its full sequence is Axonemal dynein light intermediate polypeptide 1 (258 aa).

2 disordered regions span residues 1–60 and 202–231; these read MIPP…CVPD and DLER…EEKK. Residues 176–255 are a coiled coil; the sequence is MRKALQAEQG…LKAQLEGIIA (80 aa).

It belongs to the inner dynein arm light chain family. Interacts with CFAP45. Interacts with DYNC1H1.

It is found in the cell projection. It localises to the cilium. The protein resides in the flagellum. Its subcellular location is the dynein axonemal particle. The protein localises to the cytoplasm. Functionally, involved in sperm flagellum assembly. The polypeptide is Axonemal dynein light intermediate polypeptide 1 (Rattus norvegicus (Rat)).